Reading from the N-terminus, the 578-residue chain is Proline--tRNA ligase (578 aa).

This sequence belongs to the class-II aminoacyl-tRNA synthetase family. ProS type 1 subfamily. As to quaternary structure, homodimer.

It localises to the cytoplasm. It carries out the reaction tRNA(Pro) + L-proline + ATP = L-prolyl-tRNA(Pro) + AMP + diphosphate. Functionally, catalyzes the attachment of proline to tRNA(Pro) in a two-step reaction: proline is first activated by ATP to form Pro-AMP and then transferred to the acceptor end of tRNA(Pro). As ProRS can inadvertently accommodate and process non-cognate amino acids such as alanine and cysteine, to avoid such errors it has two additional distinct editing activities against alanine. One activity is designated as 'pretransfer' editing and involves the tRNA(Pro)-independent hydrolysis of activated Ala-AMP. The other activity is designated 'posttransfer' editing and involves deacylation of mischarged Ala-tRNA(Pro). The misacylated Cys-tRNA(Pro) is not edited by ProRS. This Burkholderia orbicola (strain AU 1054) protein is Proline--tRNA ligase.